Here is a 143-residue protein sequence, read N- to C-terminus: Peptide methionine sulfoxide reductase B8 (143 aa).

Residues D18–A139 enclose the MsrB domain. Zn(2+)-binding residues include C57, C60, C103, and C106. C75 and C128 are oxidised to a cystine. C128 acts as the Nucleophile in catalysis.

This sequence belongs to the MsrB Met sulfoxide reductase family. Requires Zn(2+) as cofactor.

Its subcellular location is the cytoplasm. The protein resides in the cytosol. It catalyses the reaction L-methionyl-[protein] + [thioredoxin]-disulfide + H2O = L-methionyl-(R)-S-oxide-[protein] + [thioredoxin]-dithiol. Its function is as follows. Catalyzes the reduction of methionine sulfoxide (MetSO) to methionine in proteins. Plays a protective role against oxidative stress by restoring activity to proteins that have been inactivated by methionine oxidation. MSRB family specifically reduces the MetSO R-enantiomer. The sequence is that of Peptide methionine sulfoxide reductase B8 (MSRB8) from Arabidopsis thaliana (Mouse-ear cress).